The primary structure comprises 654 residues: Pyoverdine export ATP-binding/permease protein PvdT (654 aa).

In terms of domain architecture, ABC transporter spans 6–245 (IELCDIRKAY…AHKGIQAEEL (240 aa)). Residue 43–50 (GASGSGKS) coordinates ATP. Transmembrane regions (helical) follow at residues 282–302 (ALTL…LAVG), 529–549 (LSLM…IGVM), 584–604 (AIML…VVGA), and 614–634 (AFAL…GVVF).

The protein belongs to the ABC transporter superfamily. Macrolide exporter (TC 3.A.1.122) family. Part of the tripartite efflux system PvdRT-OpmQ, which is composed of an inner membrane component with both ATPase and permease domains, PvdT, a periplasmic membrane fusion protein, PvdR, and an outer membrane component, OpmQ.

Its subcellular location is the cell inner membrane. Its activity is regulated as follows. Has a basal ATPase activity that is stimulated by PvdR. In vitro, interaction with PVD influences the affinity of PvdT to PvdR. Part of the tripartite efflux system PvdRT-OpmQ required for the secretion into the extracellular milieu of the siderophore pyoverdine (PVD), which is involved in iron acquisition. This subunit binds PVD and drives its secretion by hydrolyzing ATP. The system is responsible for export of newly synthesized PVD after the final steps of biosynthesis have taken place in the periplasm. It is also responsible for recycling of PVD after internalization of ferri-PVD into the periplasm by the outer-membrane receptor FpvA and release of iron from PVD, thus making PVD available for new cycles of iron uptake. Contributes to resistance against ampicillin. In Pseudomonas putida (strain ATCC 47054 / DSM 6125 / CFBP 8728 / NCIMB 11950 / KT2440), this protein is Pyoverdine export ATP-binding/permease protein PvdT.